Here is a 334-residue protein sequence, read N- to C-terminus: MERCSVAQQFEDRFHRKFYYLRLSVTDVCNFKCTYCLPDGYKPSGQKNSSFLSVPEIKRVVKAFADCGTSKIRITGGEPSLRKDFPEIIHTVASTPGIEKVATTTNGYRMEKQVGQWRDAGLTHINVSVDSLDSRMFHQITGENKFTEVMRGIDKAFEVGFEQVKVNVVLMKDLNSQELPAFLNWIKDKPIQLRFIELMKTGEMDELFDKHHVSGVAIRNQLIANGWLLKVKAVNDGPAQVFVHPDYQGEIGLIMPYEKDFCESCNRLRVSATGKLHLCLFGDHGVELRDLIQEDQQEQELIDRIQAQLQTKSVSHFLHDGNSGMTPNLASIGG.

The Radical SAM core domain occupies 13–239 (RFHRKFYYLR…KVKAVNDGPA (227 aa)). Arg-22 is a GTP binding site. 2 residues coordinate [4Fe-4S] cluster: Cys-29 and Cys-33. An S-adenosyl-L-methionine-binding site is contributed by Tyr-35. Residue Cys-36 coordinates [4Fe-4S] cluster. Arg-73 lines the GTP pocket. Residue Gly-77 coordinates S-adenosyl-L-methionine. Thr-104 serves as a coordination point for GTP. Residue Ser-128 coordinates S-adenosyl-L-methionine. Lys-165 contributes to the GTP binding site. S-adenosyl-L-methionine is bound at residue Met-199. [4Fe-4S] cluster contacts are provided by Cys-262 and Cys-265. 267–269 (RLR) provides a ligand contact to GTP. Cys-279 provides a ligand contact to [4Fe-4S] cluster.

This sequence belongs to the radical SAM superfamily. MoaA family. In terms of assembly, monomer and homodimer. Requires [4Fe-4S] cluster as cofactor.

It catalyses the reaction GTP + AH2 + S-adenosyl-L-methionine = (8S)-3',8-cyclo-7,8-dihydroguanosine 5'-triphosphate + 5'-deoxyadenosine + L-methionine + A + H(+). It functions in the pathway cofactor biosynthesis; molybdopterin biosynthesis. Catalyzes the cyclization of GTP to (8S)-3',8-cyclo-7,8-dihydroguanosine 5'-triphosphate. This is GTP 3',8-cyclase from Vibrio atlanticus (strain LGP32) (Vibrio splendidus (strain Mel32)).